We begin with the raw amino-acid sequence, 448 residues long: Zinc finger CCCH domain-containing protein 43 (448 aa).

The tract at residues 1-106 (MVNSEEIADG…GWSENESENV (106 aa)) is disordered. A compositionally biased stretch (basic and acidic residues) spans 24–45 (SSHDRSLSDLNHAAEDLSDKLK). The span at 63–79 (VSESNGGLDSNAVVTIN) shows a compositional bias: polar residues. The segment covering 80–89 (QEEEEEEEDR) has biased composition (acidic residues). C3H1-type zinc fingers lie at residues 110–138 (RPGA…HPLA), 158–186 (KLGL…HTIP), 204–232 (RPGE…HPDP), 346–374 (RPDQ…HPKN), and 392–420 (RPDQ…HSVQ). The segment at 424 to 448 (STESSQAIVEPPQVSANGNESDGWN) is disordered. Residues 437–448 (VSANGNESDGWN) are compositionally biased toward polar residues.

The protein localises to the nucleus. This Arabidopsis thaliana (Mouse-ear cress) protein is Zinc finger CCCH domain-containing protein 43.